We begin with the raw amino-acid sequence, 344 residues long: N-acetyl-gamma-glutamyl-phosphate reductase (344 aa).

Cys148 is a catalytic residue.

This sequence belongs to the NAGSA dehydrogenase family. Type 1 subfamily.

The protein localises to the cytoplasm. It catalyses the reaction N-acetyl-L-glutamate 5-semialdehyde + phosphate + NADP(+) = N-acetyl-L-glutamyl 5-phosphate + NADPH + H(+). It participates in amino-acid biosynthesis; L-arginine biosynthesis; N(2)-acetyl-L-ornithine from L-glutamate: step 3/4. Its function is as follows. Catalyzes the NADPH-dependent reduction of N-acetyl-5-glutamyl phosphate to yield N-acetyl-L-glutamate 5-semialdehyde. In Clostridium botulinum (strain Eklund 17B / Type B), this protein is N-acetyl-gamma-glutamyl-phosphate reductase.